A 317-amino-acid polypeptide reads, in one-letter code: Tetraspanin-15 (317 aa).

Positions 1–43 (MADNAQVVPVEEPAATATATATATATTEPEAKSSDQMESQSDN) are disordered. The Cytoplasmic portion of the chain corresponds to 1–60 (MADNAQVVPVEEPAATATATATATATTEPEAKSSDQMESQSDNKPPMGTLMALVNILAAG). Positions 7–28 (VVPVEEPAATATATATATATTE) are enriched in low complexity. A helical transmembrane segment spans residues 61–81 (VLPIFTFVLSLTLLGYAVWLL). Residues 82 to 96 (YMRSYDCEDILGLPR) lie on the Extracellular side of the membrane. Residues 97 to 117 (VQTLASVGLLAVFVVSNAALF) form a helical membrane-spanning segment. The Cytoplasmic segment spans residues 118–126 (LRRKFPMPA). A helical transmembrane segment spans residues 127 to 147 (LVVMVVVLLLMLFIGLAYAGV). Topologically, residues 148-287 (NEMQSRRFPA…IRSVRRKWWQ (140 aa)) are extracellular. N-linked (GlcNAc...) asparagine glycosylation occurs at asparagine 224. A helical transmembrane segment spans residues 288–308 (LGIFLIVISILLLMSHLLIFL). At 309–317 (ATFWERFKG) the chain is on the cytoplasmic side.

The protein belongs to the tetraspanin (TM4SF) family.

It is found in the membrane. May be involved in the regulation of cell differentiation. The sequence is that of Tetraspanin-15 (TET15) from Arabidopsis thaliana (Mouse-ear cress).